We begin with the raw amino-acid sequence, 623 residues long: Sphingomyelinase C 2 (623 aa).

Residues 1–25 form the signal peptide; the sequence is MINKITKPKLLIGYYLLLFSLIRCL. Composition is skewed to low complexity over residues 51–61 and 67–80; these read VNSVSINNDPA and NPASANNNQVNAVP. The tract at residues 51–121 is disordered; the sequence is VNSVSINNDP…DPNPANLASA (71 aa). A compositionally biased stretch (polar residues) spans 89 to 102; that stretch reads NPVNPASANSNQVN. The span at 110-121 shows a compositional bias: low complexity; the sequence is PADPNPANLASA.

It is found in the secreted. It carries out the reaction a sphingomyelin + H2O = phosphocholine + an N-acylsphing-4-enine + H(+). The sequence is that of Sphingomyelinase C 2 (sph2) from Leptospira interrogans serogroup Icterohaemorrhagiae serovar Lai (strain 56601).